The following is a 99-amino-acid chain: UPF0235 protein HS_1657 (99 aa).

Belongs to the UPF0235 family.

The sequence is that of UPF0235 protein HS_1657 from Histophilus somni (strain 129Pt) (Haemophilus somnus).